The chain runs to 847 residues: MKMADRSGKIIPGQAYIEVEYDYEYEAKDRKIVIKQGERYILVKKTNDDWWQVKPDENSKAFYVPAQYVKEVTRKALMPPVKQVAGLPNNSTKIMQSLHLQRSTENVNKLPELSSFGKPSSSVQGTGLTRDANQNFGPSYNPGHTVNLSLDLTHNNGKFNNDSHSPKVSSQNRTRLFGHFPGPEFLDVEKTSFSQEQSCDSAGEGSERIHQDSESGDELSSSSTEQIRATTPPNQGRPDSPVYANLQELKISQSALPPLPGSPAIQINGEWETHKDSSGRCYYYDRGTQERTWKPPRWTRDASISKGDFQSPGDQELLSSEENYYSTSYSQSDSQCGSPPRGWSEELDERGHTLYTSDYTNEKWLKHIDDQGRQYYYSADGSRSEWELPKYNASSQQQREIIKSRSLDRRLQEPIVLTKWRHSTIVLDTNDKESPTASKPCFPENESSPSSPKHQDTASSPKDQEKYGLLNVTKIAENGKKVRKNWLSSWAVLQGSSLLFTKTQGSSTSWFGSNQSKPEFTVDLKGATIEMASKDKSSKKNVFELKTRQGTELLIQSDNDTVINDWFKVLSSTINNQAVDTDEGIEEEILPDSPGIEKHDKEKEQKDPKKLRSFKVSSIDSSEQKKTKKNLKKFLTRRPTLQAVREKGYIKDQVFGSNLANLCQRENGTVPKFVKLCIEHVEEYGLDVDGIYRVSGNLAVIQKLRFAVNHDEKLDLNDSKWEDIHVITGALKMFFRELPEPLFTFNHFNDFVNAIKQEPRQRVAAVKDLIRQLPKPNQDTMQILFRHLKRVVENGEKNRMTYQSIAIVFGPTLLKPEKETGNIAVHTVYQNQIVELILLELSSIFGR.

An SH3 domain is found at 12-74 (PGQAYIEVEY…PAQYVKEVTR (63 aa)). The disordered stretch occupies residues 110–241 (LPELSSFGKP…PPNQGRPDSP (132 aa)). 2 stretches are compositionally biased toward polar residues: residues 117-174 (GKPS…QNRT) and 191-200 (TSFSQEQSCD). Serine 165 is modified (phosphoserine). Residues serine 201, serine 213, and serine 215 each carry the phosphoserine modification. Polar residues predominate over residues 224 to 234 (TEQIRATTPPN). Residues threonine 230 and threonine 231 each carry the phosphothreonine modification. Position 240 is a phosphoserine (serine 240). Residue tyrosine 243 is modified to Phosphotyrosine. WW domains lie at 265–298 (IQIN…PPRW) and 358–391 (DYTN…LPKY). The interval 293–317 (WKPPRWTRDASISKGDFQSPGDQEL) is disordered. Disordered stretches follow at residues 428–466 (DTND…DQEK) and 591–625 (PDSP…SEQK). Residues 445 to 461 (NESSPSSPKHQDTASSP) are compositionally biased toward polar residues. The PH domain occupies 463–575 (DQEKYGLLNV…WFKVLSSTIN (113 aa)). At serine 593 the chain carries Phosphoserine. Basic and acidic residues predominate over residues 595–610 (GIEKHDKEKEQKDPKK). In terms of domain architecture, Rho-GAP spans 657–845 (SNLANLCQRE…LILLELSSIF (189 aa)).

GTPase activator for the Rho-type GTPases by converting them to an inactive GDP-bound state. The sequence is that of Rho GTPase-activating protein 12 (ARHGAP12) from Macaca fascicularis (Crab-eating macaque).